Reading from the N-terminus, the 298-residue chain is tRNA(Met) cytidine acetate ligase (298 aa).

ATP-binding positions include 6-19 (IAEY…HIYQ), G100, N157, and R182.

This sequence belongs to the TmcAL family.

Its subcellular location is the cytoplasm. The catalysed reaction is cytidine(34) in elongator tRNA(Met) + acetate + ATP = N(4)-acetylcytidine(34) in elongator tRNA(Met) + AMP + diphosphate. In terms of biological role, catalyzes the formation of N(4)-acetylcytidine (ac(4)C) at the wobble position of elongator tRNA(Met), using acetate and ATP as substrates. First activates an acetate ion to form acetyladenylate (Ac-AMP) and then transfers the acetyl group to tRNA to form ac(4)C34. The protein is tRNA(Met) cytidine acetate ligase of Mycoplasmopsis pulmonis (strain UAB CTIP) (Mycoplasma pulmonis).